The sequence spans 49 residues: Large ribosomal subunit protein bL33 (49 aa).

It belongs to the bacterial ribosomal protein bL33 family.

The protein is Large ribosomal subunit protein bL33 of Alkaliphilus metalliredigens (strain QYMF).